An 821-amino-acid chain; its full sequence is DNA replication licensing factor MCM6 (821 aa).

M1 carries the post-translational modification N-acetylmethionine. 3 positions are modified to phosphoserine: S13, S219, and S271. T278 bears the Phosphothreonine mark. Residues 346–553 (LYHNLCTSLF…TDYAIARRIV (208 aa)) form the MCM domain. The ATP site is built by H359, S399, T400, A401, K402, S403, and N504. The short motif at 528-531 (SRFD) is the Arginine finger element. Residues R619 and E622 each contribute to the ADP site. K643 bears the N6-acetyllysine mark. A disordered region spans residues 676 to 706 (VDEGPDGINGHADSPAPASGINGHSEDMNQD). Phosphoserine is present on residues S689 and S762. T791 carries the phosphothreonine modification.

This sequence belongs to the MCM family. Component of the MCM2-7 complex. The complex forms a toroidal hexameric ring with the proposed subunit order MCM2-MCM6-MCM4-MCM7-MCM3-MCM5. Component of the CMG helicase complex, a hexameric ring of related MCM2-7 subunits stabilized by CDC45 and the tetrameric GINS complex. May interact with MCM10. Interacts with TIPIN. Interacts with CDT1. Interacts with MCMBP. Interacts with DDI2. In terms of processing, O-glycosylated (O-GlcNAcylated), in a cell cycle-dependent manner.

Its subcellular location is the nucleus. The protein localises to the chromosome. The enzyme catalyses ATP + H2O = ADP + phosphate + H(+). Its function is as follows. Acts as a component of the MCM2-7 complex (MCM complex) which is the replicative helicase essential for 'once per cell cycle' DNA replication initiation and elongation in eukaryotic cells. Core component of CDC45-MCM-GINS (CMG) helicase, the molecular machine that unwinds template DNA during replication, and around which the replisome is built. The active ATPase sites in the MCM2-7 ring are formed through the interaction surfaces of two neighboring subunits such that a critical structure of a conserved arginine finger motif is provided in trans relative to the ATP-binding site of the Walker A box of the adjacent subunit. The six ATPase active sites, however, are likely to contribute differentially to the complex helicase activity. This chain is DNA replication licensing factor MCM6 (MCM6), found in Bos taurus (Bovine).